The chain runs to 230 residues: Ribose-5-phosphate isomerase A (230 aa).

Residues 29–32 (TGST), 85–88 (DGAD), and 99–102 (KGAG) each bind substrate. E108 acts as the Proton acceptor in catalysis. Substrate is bound at residue K126.

This sequence belongs to the ribose 5-phosphate isomerase family. In terms of assembly, homodimer.

It carries out the reaction aldehydo-D-ribose 5-phosphate = D-ribulose 5-phosphate. Its pathway is carbohydrate degradation; pentose phosphate pathway; D-ribose 5-phosphate from D-ribulose 5-phosphate (non-oxidative stage): step 1/1. Its function is as follows. Catalyzes the reversible conversion of ribose-5-phosphate to ribulose 5-phosphate. The polypeptide is Ribose-5-phosphate isomerase A (Synechococcus sp. (strain JA-3-3Ab) (Cyanobacteria bacterium Yellowstone A-Prime)).